The chain runs to 153 residues: Probable inactive ribonuclease-like protein 13 (153 aa).

The signal sequence occupies residues 1–22 (MASDAASLLVLQLVLQPTLVTG).

The protein belongs to the pancreatic ribonuclease family.

It is found in the secreted. In terms of biological role, does not exhibit any ribonuclease activity. The sequence is that of Probable inactive ribonuclease-like protein 13 (Rnase13) from Rattus norvegicus (Rat).